The primary structure comprises 326 residues: N-acetyl-gamma-glutamyl-phosphate reductase (326 aa).

Residue Cys155 is part of the active site.

This sequence belongs to the NAGSA dehydrogenase family. Type 1 subfamily.

It is found in the cytoplasm. The enzyme catalyses N-acetyl-L-glutamate 5-semialdehyde + phosphate + NADP(+) = N-acetyl-L-glutamyl 5-phosphate + NADPH + H(+). It participates in amino-acid biosynthesis; L-arginine biosynthesis; N(2)-acetyl-L-ornithine from L-glutamate: step 3/4. Catalyzes the NADPH-dependent reduction of N-acetyl-5-glutamyl phosphate to yield N-acetyl-L-glutamate 5-semialdehyde. This chain is N-acetyl-gamma-glutamyl-phosphate reductase, found in Shewanella sp. (strain MR-4).